Consider the following 44-residue polypeptide: Photosystem I reaction center subunit IX (44 aa).

A helical transmembrane segment spans residues 7 to 27 (YLSVAPVLSTLWFASLAGLLI).

It belongs to the PsaJ family.

It localises to the plastid. The protein localises to the chloroplast thylakoid membrane. May help in the organization of the PsaE and PsaF subunits. The polypeptide is Photosystem I reaction center subunit IX (Barbarea verna (Land cress)).